A 138-amino-acid chain; its full sequence is uncharacterized protein (138 aa).

This is an uncharacterized protein from Methanocaldococcus jannaschii (strain ATCC 43067 / DSM 2661 / JAL-1 / JCM 10045 / NBRC 100440) (Methanococcus jannaschii).